The primary structure comprises 224 residues: MSISKWPASERPREKLLSMGAPALSDAELLAIFLRIGCVGKSAVDVARELLQQFGGLRPLLEASQKEFCRGRGLGMVKYVQLQAVLEMARRHIHADMKVGDLLSSPHLVRDYLRAQLRHHAREVFAVLFLDNQNRLIAYEELFQGTIDGANVYPREVVKQALAHNAAAVIFAHNHPSGLAEPSQADIRITRRLQEALGLVDIRVLDHLVVGDGELVSLAERGWL.

The MPN domain occupies 102–224 (LLSSPHLVRD…LVSLAERGWL (123 aa)). Residues H173, H175, and D186 each coordinate Zn(2+). The JAMM motif signature appears at 173–186 (HNHPSGLAEPSQAD).

The protein belongs to the UPF0758 family.

The chain is UPF0758 protein CJA_3522 from Cellvibrio japonicus (strain Ueda107) (Pseudomonas fluorescens subsp. cellulosa).